Here is a 292-residue protein sequence, read N- to C-terminus: 4-hydroxy-tetrahydrodipicolinate synthase (292 aa).

Threonine 45 provides a ligand contact to pyruvate. Tyrosine 133 serves as the catalytic Proton donor/acceptor. Residue lysine 161 is the Schiff-base intermediate with substrate of the active site. A pyruvate-binding site is contributed by isoleucine 203.

The protein belongs to the DapA family. In terms of assembly, homotetramer; dimer of dimers.

The protein localises to the cytoplasm. The enzyme catalyses L-aspartate 4-semialdehyde + pyruvate = (2S,4S)-4-hydroxy-2,3,4,5-tetrahydrodipicolinate + H2O + H(+). It functions in the pathway amino-acid biosynthesis; L-lysine biosynthesis via DAP pathway; (S)-tetrahydrodipicolinate from L-aspartate: step 3/4. Its function is as follows. Catalyzes the condensation of (S)-aspartate-beta-semialdehyde [(S)-ASA] and pyruvate to 4-hydroxy-tetrahydrodipicolinate (HTPA). The protein is 4-hydroxy-tetrahydrodipicolinate synthase of Vibrio vulnificus (strain YJ016).